A 263-amino-acid polypeptide reads, in one-letter code: H-2 class II histocompatibility antigen, A-K beta chain (263 aa).

Positions 1-27 (MALQIPSLLLLAAVVVLTVLSSPGTEG) are cleaved as a signal peptide. The beta-1 stretch occupies residues 28 to 120 (GNSERHFVHQ…TETPTSLRRL (93 aa)). Topologically, residues 28–224 (GNSERHFVHQ…RAQSESARSK (197 aa)) are extracellular. Intrachain disulfides connect C42/C104 and C143/C199. N-linked (GlcNAc...) asparagine glycosylation is present at N46. The tract at residues 121 to 214 (EQPSVVISLS…SLKSPITVEW (94 aa)) is beta-2. In terms of domain architecture, Ig-like C1-type spans 123-211 (PSVVISLSRT…EHPSLKSPIT (89 aa)). The connecting peptide stretch occupies residues 215–224 (RAQSESARSK). Residues 225–245 (MLSGIGGCVLGVIFLGLGLFI) form a helical membrane-spanning segment. Residues 246–263 (RHRSQKGPRGPPPAGLLQ) lie on the Cytoplasmic side of the membrane.

This sequence belongs to the MHC class II family. In terms of processing, ubiquitinated in immature dendritic cells leading to down-regulation of MHC class II.

It localises to the membrane. This Mus musculus (Mouse) protein is H-2 class II histocompatibility antigen, A-K beta chain (H2-Ab1).